A 329-amino-acid chain; its full sequence is MKNNYTSLKSPLDEEDELKTDHEIDLEKGPLPEYDSEEEGALPPYSDHALVNNPPNTHRENNPSRSTDNSSPFLIKLLISFTPIYVLNVLAICYLTYKDAFFKDYGAAEWTLFGFWCLVCTLALIFLTYFYETWVKAVKVTVISLAKCVKVISIGLFNIRREMMIIIWILWLIICCILFVYIKSGDLILNKALICSTCTISAVLLLIVSSVCIPFWTFERTLAKLAKVLLLQSGIVLVLNGTMFLRGKHFERIGCEIEASVLFIMGNVLFLCEMECPGALIRTRNSIRNGIAFILGGIGNAMMGLANAIRGANDNNDIPLGEMDVESEV.

Residues 1–68 (MKNNYTSLKS…RENNPSRSTD (68 aa)) form a disordered region. Positions 19-30 (KTDHEIDLEKGP) are enriched in basic and acidic residues. 5 consecutive transmembrane segments (helical) span residues 73 to 95 (FLIK…ICYL), 110 to 132 (WTLF…YFYE), 165 to 182 (IIIW…FVYI), 192 to 214 (ALIC…VCIP), and 290 to 312 (GIAF…IRGA).

This sequence belongs to the WTF family. In terms of assembly, homomer. Interacts with other proteins that exhibit high sequence similarity.

It localises to the spore membrane. The protein localises to the vacuole membrane. In terms of biological role, acts as a suppressor component of the dual wtf meiotic drive system, and can suppress but not confer meiotic drive by compatible poisons. Wtf meiotic drive systems promote unequal transmission of alleles from the parental zygote to progeny spores by encoding a poison and an antidote from the same locus; the poison is trans-acting and forms toxic aggregates in all spores within an ascus, wherease the antidote is spore-specific and targets aggregates for degradation by the vacuole. Meiotic drive by wtf systems therefore lead to poisoning of all progeny that do not inherit the dual poison/antidote allele, or express a compatible antidote. In Schizosaccharomyces pombe (strain 972 / ATCC 24843) (Fission yeast), this protein is Meiotic drive suppressor wtf21.